The following is an 830-amino-acid chain: DNA helicase MCM8 (830 aa).

The MCM domain maps to 394 to 601 (LFRIIVNSLC…DHDHLLSEHV (208 aa)). 446–453 (GDPGLGKS) contributes to the ATP binding site.

The protein belongs to the MCM family. Component of the MCM8-MCM9 complex, which forms a hexamer composed of MCM8 and MCM9.

Its subcellular location is the nucleus. It catalyses the reaction ATP + H2O = ADP + phosphate + H(+). Its function is as follows. Component of the MCM8-MCM9 complex, a complex involved in homologous recombination repair following DNA interstrand cross-links and plays a key role during gametogenesis. The MCM8-MCM9 complex probably acts as a hexameric helicase required to process aberrant forks into homologous recombination substrates and to orchestrate homologous recombination with resection, fork stabilization and fork restart. The polypeptide is DNA helicase MCM8 (MCM8) (Gallus gallus (Chicken)).